We begin with the raw amino-acid sequence, 89 residues long: Cell division topological specificity factor (89 aa).

The protein belongs to the MinE family.

In terms of biological role, prevents the cell division inhibition by proteins MinC and MinD at internal division sites while permitting inhibition at polar sites. This ensures cell division at the proper site by restricting the formation of a division septum at the midpoint of the long axis of the cell. The chain is Cell division topological specificity factor from Clostridium beijerinckii (strain ATCC 51743 / NCIMB 8052) (Clostridium acetobutylicum).